The sequence spans 508 residues: Hydroxymethylglutaryl-CoA synthase, mitochondrial (508 aa).

Residues 1 to 37 constitute a mitochondrion transit peptide; sequence MQRLLAPARRVLQVKRAMQETSLTPAHLLSAAQQRFS. Residue lysine 52 is modified to N6-succinyllysine. Glutamate 80 and alanine 81 together coordinate (3S)-3-hydroxy-3-methylglutaryl-CoA. Lysine 83 and lysine 118 each carry N6-acetyllysine; alternate. N6-succinyllysine; alternate is present on residues lysine 83 and lysine 118. Glutamate 132 functions as the Proton donor/acceptor in the catalytic mechanism. Cysteine 166, asparagine 204, and threonine 208 together coordinate (3S)-3-hydroxy-3-methylglutaryl-CoA. Cysteine 166 serves as the catalytic Acyl-thioester intermediate. Lysine 221 is subject to N6-succinyllysine. N6-acetyllysine is present on lysine 243. Lysine 256 is subject to N6-acetyllysine; alternate. Lysine 256 carries the post-translational modification N6-succinyllysine; alternate. (3S)-3-hydroxy-3-methylglutaryl-CoA-binding residues include serine 258 and histidine 301. The active-site Proton donor/acceptor is the histidine 301. Lysine 306 carries the N6-acetyllysine modification. Residue lysine 310 participates in (3S)-3-hydroxy-3-methylglutaryl-CoA binding. Residues lysine 310 and lysine 327 each carry the N6-acetyllysine; alternate modification. Lysine 310 and lysine 327 each carry N6-succinyllysine; alternate. An N6-succinyllysine modification is found at lysine 333. Lysine 342, lysine 350, lysine 354, and lysine 358 each carry N6-acetyllysine; alternate. Lysine 342, lysine 350, lysine 354, and lysine 358 each carry N6-succinyllysine; alternate. (3S)-3-hydroxy-3-methylglutaryl-CoA is bound by residues asparagine 380 and serine 414. Lysine 427 is modified (N6-acetyllysine). A Phosphoserine modification is found at serine 433. Lysine 437 is modified (N6-acetyllysine). Phosphoserine is present on serine 440. Lysine 447 is subject to N6-acetyllysine; alternate. Lysine 447 bears the N6-succinyllysine; alternate mark. The residue at position 456 (serine 456) is a Phosphoserine. Lysine 473 carries the N6-acetyllysine; alternate modification. Lysine 473 carries the post-translational modification N6-succinyllysine; alternate. Serine 477 is modified (phosphoserine).

The protein belongs to the thiolase-like superfamily. HMG-CoA synthase family. Homodimer. Post-translationally, acetylation of Lys-427 is observed in liver mitochondria from fasted mice but not from fed mice. In terms of processing, succinylated. Desuccinylated by SIRT5. Succinylation, at least at Lys-83 and Lys-310, inhibits the enzymatic activity. Liver and kidney.

It is found in the mitochondrion. It carries out the reaction acetoacetyl-CoA + acetyl-CoA + H2O = (3S)-3-hydroxy-3-methylglutaryl-CoA + CoA + H(+). Its pathway is metabolic intermediate biosynthesis; (R)-mevalonate biosynthesis; (R)-mevalonate from acetyl-CoA: step 2/3. Functionally, catalyzes the first irreversible step in ketogenesis, condensing acetyl-CoA to acetoacetyl-CoA to form HMG-CoA, which is converted by HMG-CoA reductase (HMGCR) into mevalonate. The sequence is that of Hydroxymethylglutaryl-CoA synthase, mitochondrial (Hmgcs2) from Mus musculus (Mouse).